Here is a 157-residue protein sequence, read N- to C-terminus: Protein MG115 (157 aa).

It belongs to the CinA family.

In Mycoplasma genitalium (strain ATCC 33530 / DSM 19775 / NCTC 10195 / G37) (Mycoplasmoides genitalium), this protein is Protein MG115.